Consider the following 20-residue polypeptide: Tetracycline resistance leader peptide (20 aa).

The segment at 1-20 (MKCNKMNRVQLKEGSVSMTL) is disordered.

The sequence is that of Tetracycline resistance leader peptide (tetL) from Bacillus subtilis (strain 168).